The following is a 525-amino-acid chain: MALSNASSLSTRSIYGGDLSHRPSNRQSSFTFHPAVNTKPKSVNLVTAVHAAEPARNAVSVKESVASSSSGALKWTPESWKLKKALQLPDYPNANELESVLKTIEAFPPIVFAGEARNLEERLADAAVGKAFLLQGGDCAESFKEFNATNIRDTFRVLLQMSIVLTFGGQVPVIKVGRMAGQFAKPRSDAFEEKDGVKLPSYKGDNINGDTFDEKSRIPDPNRMIRAYTQSAATLNLLRAFATGGYAAIQRVTQWNLDFVEQSEQADRYQELANRVDEALGFMSACGLGTDHPLMTTTDFYTSHECLLLPYEQSLTRLDSTSGLYYDCSAHMVWCGERTRQLDGAHVEFLRGIANPLGIKVSNKMDPFELVKLVEILNPNNKPGRITVIVRMGAENMRVKLPHLIRAVRRSGQIVTWVCDPMHGNTIKAPCGLKTRAFDSILAEVRAFLDVHEQEGSHAGGIHLEMTGQNVTECIGGSRTVTYDDLSSRYHTHCDPRLNASQSLELAFIVAERLRKRRTGSQRVS.

Residues 1–13 (MALSNASSLSTRS) show a composition bias toward polar residues. Residues 1-35 (MALSNASSLSTRSIYGGDLSHRPSNRQSSFTFHPA) form a disordered region. The N-terminal 52 residues, 1 to 52 (MALSNASSLSTRSIYGGDLSHRPSNRQSSFTFHPAVNTKPKSVNLVTAVHAA), are a transit peptide targeting the chloroplast.

The protein belongs to the class-II DAHP synthase family.

The protein localises to the plastid. Its subcellular location is the chloroplast. The enzyme catalyses D-erythrose 4-phosphate + phosphoenolpyruvate + H2O = 7-phospho-2-dehydro-3-deoxy-D-arabino-heptonate + phosphate. It participates in metabolic intermediate biosynthesis; chorismate biosynthesis; chorismate from D-erythrose 4-phosphate and phosphoenolpyruvate: step 1/7. In Arabidopsis thaliana (Mouse-ear cress), this protein is Phospho-2-dehydro-3-deoxyheptonate aldolase 1, chloroplastic (DHS1).